Consider the following 114-residue polypeptide: Large ribosomal subunit protein bL19 (114 aa).

This sequence belongs to the bacterial ribosomal protein bL19 family.

In terms of biological role, this protein is located at the 30S-50S ribosomal subunit interface and may play a role in the structure and function of the aminoacyl-tRNA binding site. The protein is Large ribosomal subunit protein bL19 (rplS) of Listeria innocua serovar 6a (strain ATCC BAA-680 / CLIP 11262).